We begin with the raw amino-acid sequence, 264 residues long: S-adenosylmethionine decarboxylase proenzyme (264 aa).

The active-site Schiff-base intermediate with substrate; via pyruvic acid is Ser-112. At Ser-112 the chain carries Pyruvic acid (Ser); by autocatalysis. The active-site Proton acceptor; for processing activity is His-117. Cys-140 serves as the catalytic Proton donor; for catalytic activity.

It belongs to the prokaryotic AdoMetDC family. Type 2 subfamily. As to quaternary structure, heterooctamer of four alpha and four beta chains arranged as a tetramer of alpha/beta heterodimers. Pyruvate serves as cofactor. In terms of processing, is synthesized initially as an inactive proenzyme. Formation of the active enzyme involves a self-maturation process in which the active site pyruvoyl group is generated from an internal serine residue via an autocatalytic post-translational modification. Two non-identical subunits are generated from the proenzyme in this reaction, and the pyruvate is formed at the N-terminus of the alpha chain, which is derived from the carboxyl end of the proenzyme. The post-translation cleavage follows an unusual pathway, termed non-hydrolytic serinolysis, in which the side chain hydroxyl group of the serine supplies its oxygen atom to form the C-terminus of the beta chain, while the remainder of the serine residue undergoes an oxidative deamination to produce ammonia and the pyruvoyl group blocking the N-terminus of the alpha chain.

It catalyses the reaction S-adenosyl-L-methionine + H(+) = S-adenosyl 3-(methylsulfanyl)propylamine + CO2. It functions in the pathway amine and polyamine biosynthesis; S-adenosylmethioninamine biosynthesis; S-adenosylmethioninamine from S-adenosyl-L-methionine: step 1/1. Catalyzes the decarboxylation of S-adenosylmethionine to S-adenosylmethioninamine (dcAdoMet), the propylamine donor required for the synthesis of the polyamines spermine and spermidine from the diamine putrescine. The protein is S-adenosylmethionine decarboxylase proenzyme of Klebsiella pneumoniae (strain 342).